The primary structure comprises 152 residues: Phospholipase A2 (152 aa).

The N-terminal stretch at methionine 1–alanine 20 is a signal peptide. Intrachain disulfides connect cysteine 39–cysteine 96, cysteine 53–cysteine 142, cysteine 55–cysteine 70, cysteine 69–cysteine 124, cysteine 75–cysteine 149, cysteine 76–cysteine 117, cysteine 85–cysteine 110, and cysteine 103–cysteine 115. Ca(2+) contacts are provided by glycine 56 and glycine 58. Histidine 73 is an active-site residue. Residue aspartate 74 coordinates Ca(2+). The active site involves aspartate 118.

Belongs to the phospholipase A2 family. As to expression, expressed by the venom gland. Heavily expressed in the venom gland transcriptome.

Its subcellular location is the secreted. It catalyses the reaction a 1,2-diacyl-sn-glycero-3-phosphocholine + H2O = a 1-acyl-sn-glycero-3-phosphocholine + a fatty acid + H(+). Its function is as follows. PA2 catalyzes the calcium-dependent hydrolysis of the 2-acyl groups in 3-sn-phosphoglycerides. This is Phospholipase A2 from Meiacanthus atrodorsalis (Forktail blenny).